We begin with the raw amino-acid sequence, 374 residues long: uncharacterized protein (374 aa).

A compositionally biased stretch (basic and acidic residues) spans 1 to 13; sequence METKYHEYDDVQT. Disordered stretches follow at residues 1–20, 91–193, and 236–374; these read METKYHEYDDVQTKDTPSNK, SPMT…PLNQ, and KINN…SDFE. A compositionally biased stretch (low complexity) spans 95 to 155; it reads NNNNNNNNNN…NNSSNNNNNN (61 aa). The segment covering 166 to 193 has biased composition (polar residues); it reads ISSNQSSPLSIYSTPPNPSSYVSSPLNQ. Residues 242 to 262 show a composition bias toward pro residues; sequence APPPPPKACAPPPPPPPPPPI. A compositionally biased stretch (low complexity) spans 277-300; sequence NNNNNNNNNNNSSNTNDSNNTNNT.

This is an uncharacterized protein from Dictyostelium discoideum (Social amoeba).